A 165-amino-acid polypeptide reads, in one-letter code: Cyanate hydratase (165 aa).

Residues 1 to 20 (MAQNKANTVSQLQSLKNKSG) form a disordered region. Residues R90, E93, and S116 contribute to the active site.

Belongs to the cyanase family.

It carries out the reaction cyanate + hydrogencarbonate + 3 H(+) = NH4(+) + 2 CO2. Catalyzes the reaction of cyanate with bicarbonate to produce ammonia and carbon dioxide. The sequence is that of Cyanate hydratase from Medicago truncatula (Barrel medic).